Here is a 337-residue protein sequence, read N- to C-terminus: Large ribosomal subunit protein uL3 (337 aa).

The segment at 1–32 (MAKGHRPRRGSLAYSPRKRSQSHIPRFRSWPE) is disordered.

It belongs to the universal ribosomal protein uL3 family. In terms of assembly, part of the 50S ribosomal subunit. Forms a cluster with proteins L14 and L24e.

Functionally, one of the primary rRNA binding proteins, it binds directly near the 3'-end of the 23S rRNA, where it nucleates assembly of the 50S subunit. The chain is Large ribosomal subunit protein uL3 from Methanococcoides burtonii (strain DSM 6242 / NBRC 107633 / OCM 468 / ACE-M).